A 342-amino-acid chain; its full sequence is tRNA N6-adenosine threonylcarbamoyltransferase (342 aa).

Residues H114 and H118 each coordinate Fe cation. Residues L136–G140, D169, G182, D186, and N275 each bind substrate. Position 301 (D301) interacts with Fe cation.

This sequence belongs to the KAE1 / TsaD family. Fe(2+) is required as a cofactor.

It localises to the cytoplasm. It catalyses the reaction L-threonylcarbamoyladenylate + adenosine(37) in tRNA = N(6)-L-threonylcarbamoyladenosine(37) in tRNA + AMP + H(+). In terms of biological role, required for the formation of a threonylcarbamoyl group on adenosine at position 37 (t(6)A37) in tRNAs that read codons beginning with adenine. Is involved in the transfer of the threonylcarbamoyl moiety of threonylcarbamoyl-AMP (TC-AMP) to the N6 group of A37, together with TsaE and TsaB. TsaD likely plays a direct catalytic role in this reaction. The sequence is that of tRNA N6-adenosine threonylcarbamoyltransferase from Streptococcus pyogenes serotype M4 (strain MGAS10750).